The sequence spans 1427 residues: DNA-directed RNA polymerase subunit beta' (1427 aa).

4 residues coordinate Zn(2+): cysteine 66, cysteine 68, cysteine 81, and cysteine 84. Aspartate 472, aspartate 474, and aspartate 476 together coordinate Mg(2+). Cysteine 815, cysteine 889, cysteine 896, and cysteine 899 together coordinate Zn(2+).

Belongs to the RNA polymerase beta' chain family. The RNAP catalytic core consists of 2 alpha, 1 beta, 1 beta' and 1 omega subunit. When a sigma factor is associated with the core the holoenzyme is formed, which can initiate transcription. Mg(2+) serves as cofactor. The cofactor is Zn(2+).

It catalyses the reaction RNA(n) + a ribonucleoside 5'-triphosphate = RNA(n+1) + diphosphate. Functionally, DNA-dependent RNA polymerase catalyzes the transcription of DNA into RNA using the four ribonucleoside triphosphates as substrates. In Bacteroides thetaiotaomicron (strain ATCC 29148 / DSM 2079 / JCM 5827 / CCUG 10774 / NCTC 10582 / VPI-5482 / E50), this protein is DNA-directed RNA polymerase subunit beta'.